The following is a 328-amino-acid chain: Phosphate acyltransferase (328 aa).

It belongs to the PlsX family. Homodimer. Probably interacts with PlsY.

It localises to the cytoplasm. The catalysed reaction is a fatty acyl-[ACP] + phosphate = an acyl phosphate + holo-[ACP]. It functions in the pathway lipid metabolism; phospholipid metabolism. Its function is as follows. Catalyzes the reversible formation of acyl-phosphate (acyl-PO(4)) from acyl-[acyl-carrier-protein] (acyl-ACP). This enzyme utilizes acyl-ACP as fatty acyl donor, but not acyl-CoA. The chain is Phosphate acyltransferase from Staphylococcus saprophyticus subsp. saprophyticus (strain ATCC 15305 / DSM 20229 / NCIMB 8711 / NCTC 7292 / S-41).